The chain runs to 493 residues: Glycylpeptide N-tetradecanoyltransferase (493 aa).

Residue 45 to 48 (HKFW) coordinates tetradecanoyl-CoA. The interval 53–73 (VPQITGSGAPAPIEEGPIDDP) is disordered. Tetradecanoyl-CoA is bound by residues 182 to 184 (LCV) and 190 to 194 (SKRLA). Catalysis depends on L493, which acts as the Proton acceptor; via carboxylate.

The protein belongs to the NMT family. Monomer.

It is found in the cytoplasm. The catalysed reaction is N-terminal glycyl-[protein] + tetradecanoyl-CoA = N-tetradecanoylglycyl-[protein] + CoA + H(+). In terms of biological role, adds a myristoyl group to the N-terminal glycine residue of certain cellular proteins. In Cryptococcus neoformans var. neoformans serotype D (strain B-3501A) (Filobasidiella neoformans), this protein is Glycylpeptide N-tetradecanoyltransferase.